We begin with the raw amino-acid sequence, 326 residues long: MDNAFSPSDLKTILHSKRANVYYLQHCRILVNGGRVEYVTEEGNQSLYWNIPIANTSVVMLGTGTSVTQAAMREFARAGVMIGFCGGGGTPLFAANEAEVAVSWLSPQSEYRPTEYLQDWVSFWFDDEKRLAAAIAFQQVRITQIRQHWLGSRLSRESRFTFKSEHLQALLDRYQKGLTDCRTSNDVLVQEAMMTKALYRLAANAVSYGDFTRAKRGGGTDLANRFLDHGNYLAYGLAAVSTWVLGLPHGLAVLHGKTRRGGLVFDVADLIKDALVLPQAFIAAMEGEDEQEFRQRCLTAFQQSEALDVMIGSLQDVASKLSQVVR.

Residues Glu191, His255, and Asp269 each contribute to the Mn(2+) site.

Belongs to the CRISPR-associated endonuclease Cas1 family. Homodimer. Interacts with Cas3, in the absence of crRNA. The cofactor is Mg(2+). Mn(2+) is required as a cofactor.

In terms of biological role, CRISPR (clustered regularly interspaced short palindromic repeat), is an adaptive immune system that provides protection against mobile genetic elements (viruses, transposable elements and conjugative plasmids). CRISPR clusters contain sequences complementary to antecedent mobile elements and target invading nucleic acids. CRISPR clusters are transcribed and processed into CRISPR RNA (crRNA). Acts as a dsDNA endonuclease. Involved in the integration of spacer DNA into the CRISPR cassette. This Pectobacterium atrosepticum (strain SCRI 1043 / ATCC BAA-672) (Erwinia carotovora subsp. atroseptica) protein is CRISPR-associated endonuclease Cas1.